Reading from the N-terminus, the 585-residue chain is Putative phospholipase B-like 2 (585 aa).

An N-terminal signal peptide occupies residues 1 to 35; it reads MAAPMDRTHGGRAARALRRALALASLAGLLLSGLA. Asn84, Asn102, and Asn106 each carry an N-linked (GlcNAc...) asparagine glycan. Cysteines 138 and 148 form a disulfide. 2 N-linked (GlcNAc...) asparagine glycosylation sites follow: Asn227 and Asn432. A disulfide bond links Cys488 and Cys491. N-linked (GlcNAc...) asparagine glycosylation is present at Asn511.

Belongs to the phospholipase B-like family. As to quaternary structure, interacts with IGF2R. Glycosylated; contains mannose 6-phosphate sugars.

Its subcellular location is the lysosome lumen. Putative phospholipase. The protein is Putative phospholipase B-like 2 (Plbd2) of Rattus norvegicus (Rat).